The chain runs to 407 residues: Probable tRNA sulfurtransferase (407 aa).

The 105-residue stretch at 61–165 folds into the THUMP domain; the sequence is NEITNRLSKI…LDAIYMYEEV (105 aa). Residues 183-184, 208-209, Arg-265, Gly-287, and Gln-296 each bind ATP; these read ML and HF.

This sequence belongs to the ThiI family.

The protein localises to the cytoplasm. It carries out the reaction [ThiI sulfur-carrier protein]-S-sulfanyl-L-cysteine + a uridine in tRNA + 2 reduced [2Fe-2S]-[ferredoxin] + ATP + H(+) = [ThiI sulfur-carrier protein]-L-cysteine + a 4-thiouridine in tRNA + 2 oxidized [2Fe-2S]-[ferredoxin] + AMP + diphosphate. It catalyses the reaction [ThiS sulfur-carrier protein]-C-terminal Gly-Gly-AMP + S-sulfanyl-L-cysteinyl-[cysteine desulfurase] + AH2 = [ThiS sulfur-carrier protein]-C-terminal-Gly-aminoethanethioate + L-cysteinyl-[cysteine desulfurase] + A + AMP + 2 H(+). Its pathway is cofactor biosynthesis; thiamine diphosphate biosynthesis. Its function is as follows. Catalyzes the ATP-dependent transfer of a sulfur to tRNA to produce 4-thiouridine in position 8 of tRNAs, which functions as a near-UV photosensor. Also catalyzes the transfer of sulfur to the sulfur carrier protein ThiS, forming ThiS-thiocarboxylate. This is a step in the synthesis of thiazole, in the thiamine biosynthesis pathway. The sulfur is donated as persulfide by IscS. The chain is Probable tRNA sulfurtransferase from Staphylococcus aureus (strain MRSA252).